The sequence spans 197 residues: Fe/S biogenesis protein NfuA (197 aa).

[4Fe-4S] cluster contacts are provided by Cys-155 and Cys-158.

The protein belongs to the NfuA family. As to quaternary structure, homodimer. [4Fe-4S] cluster is required as a cofactor.

Its function is as follows. Involved in iron-sulfur cluster biogenesis. Binds a 4Fe-4S cluster, can transfer this cluster to apoproteins, and thereby intervenes in the maturation of Fe/S proteins. Could also act as a scaffold/chaperone for damaged Fe/S proteins. This chain is Fe/S biogenesis protein NfuA, found in Pseudomonas syringae pv. syringae (strain B728a).